A 67-amino-acid chain; its full sequence is Alpha-toxin Bu1 (67 aa).

Positions 3 to 65 (RDAYIADDKN…VPIRIPGRCR (63 aa)) constitute an LCN-type CS-alpha/beta domain. Intrachain disulfides connect Cys13–Cys64, Cys17–Cys37, Cys23–Cys47, and Cys27–Cys49. Arginine amide is present on Arg65.

The protein belongs to the long (4 C-C) scorpion toxin superfamily. Sodium channel inhibitor family. Alpha subfamily. As to expression, expressed by the venom gland.

Its subcellular location is the secreted. In terms of biological role, alpha toxins bind voltage-independently at site-3 of sodium channels (Nav) and inhibit the inactivation of the activated channels, thereby blocking neuronal transmission. Since the experiments have been done on F11 cells (immortalized cell line derived from rat DRG neurons mainly expressing Nav1.3/SCN3A, but also Nav1.7/SCN9A and Nav1.2/SCN2A), it is supposed to act on these channels. The slow of inactivation process is partially reversible. Is lethal to mice. The sequence is that of Alpha-toxin Bu1 from Buthacus macrocentrus (Turkish scorpion).